A 339-amino-acid polypeptide reads, in one-letter code: Ketol-acid reductoisomerase (NADP(+)) (339 aa).

A KARI N-terminal Rossmann domain is found at 1–182 (MRVYYDRDAD…GGGRAGIIET (182 aa)). NADP(+) is bound by residues 24 to 27 (YGSQ), arginine 48, serine 51, serine 53, and 83 to 86 (DELQ). Histidine 108 is a catalytic residue. Glycine 134 provides a ligand contact to NADP(+). Residues 183 to 328 (TFREECETDL…AKLRDMMPWI (146 aa)) form the KARI C-terminal knotted domain. Residues aspartate 191, glutamate 195, glutamate 227, and glutamate 231 each contribute to the Mg(2+) site. Serine 252 is a binding site for substrate.

It belongs to the ketol-acid reductoisomerase family. Requires Mg(2+) as cofactor.

It carries out the reaction (2R)-2,3-dihydroxy-3-methylbutanoate + NADP(+) = (2S)-2-acetolactate + NADPH + H(+). The enzyme catalyses (2R,3R)-2,3-dihydroxy-3-methylpentanoate + NADP(+) = (S)-2-ethyl-2-hydroxy-3-oxobutanoate + NADPH + H(+). It functions in the pathway amino-acid biosynthesis; L-isoleucine biosynthesis; L-isoleucine from 2-oxobutanoate: step 2/4. It participates in amino-acid biosynthesis; L-valine biosynthesis; L-valine from pyruvate: step 2/4. Involved in the biosynthesis of branched-chain amino acids (BCAA). Catalyzes an alkyl-migration followed by a ketol-acid reduction of (S)-2-acetolactate (S2AL) to yield (R)-2,3-dihydroxy-isovalerate. In the isomerase reaction, S2AL is rearranged via a Mg-dependent methyl migration to produce 3-hydroxy-3-methyl-2-ketobutyrate (HMKB). In the reductase reaction, this 2-ketoacid undergoes a metal-dependent reduction by NADPH to yield (R)-2,3-dihydroxy-isovalerate. The chain is Ketol-acid reductoisomerase (NADP(+)) from Rhodopseudomonas palustris (strain BisB18).